Consider the following 168-residue polypeptide: Ribosome maturation factor RimM (168 aa).

In terms of domain architecture, PRC barrel spans 92 to 166 (EDTFYKADLI…RITVDPIEGM (75 aa)).

Belongs to the RimM family. In terms of assembly, binds ribosomal protein uS19.

It is found in the cytoplasm. In terms of biological role, an accessory protein needed during the final step in the assembly of 30S ribosomal subunit, possibly for assembly of the head region. Essential for efficient processing of 16S rRNA. May be needed both before and after RbfA during the maturation of 16S rRNA. It has affinity for free ribosomal 30S subunits but not for 70S ribosomes. The polypeptide is Ribosome maturation factor RimM (Alkaliphilus metalliredigens (strain QYMF)).